The primary structure comprises 224 residues: Germin-like protein 8-11 (224 aa).

The first 22 residues, 1–22, serve as a signal peptide directing secretion; it reads MASSSFLLLATLLAMASWQGMA. Residues C32 and C47 are joined by a disulfide bond. Residues 62-212 form the Cupin type-1 domain; sequence AMLDTPRKTN…AFQVEKGTID (151 aa). A glycan (N-linked (GlcNAc...) asparagine) is linked at N76. H109, H111, E116, and H157 together coordinate Mn(2+).

The protein belongs to the germin family. In terms of assembly, oligomer (believed to be a pentamer but probably hexamer).

Its subcellular location is the secreted. The protein resides in the extracellular space. The protein localises to the apoplast. Its function is as follows. Plays a role in broad-spectrum disease resistance. Probably has no oxalate oxidase activity even if the active site is conserved. This chain is Germin-like protein 8-11, found in Oryza sativa subsp. japonica (Rice).